The sequence spans 368 residues: Phosphate acyltransferase (368 aa).

The interval Leu-337 to Ala-368 is disordered.

It belongs to the PlsX family. In terms of assembly, homodimer. Probably interacts with PlsY.

It localises to the cytoplasm. The catalysed reaction is a fatty acyl-[ACP] + phosphate = an acyl phosphate + holo-[ACP]. It participates in lipid metabolism; phospholipid metabolism. Functionally, catalyzes the reversible formation of acyl-phosphate (acyl-PO(4)) from acyl-[acyl-carrier-protein] (acyl-ACP). This enzyme utilizes acyl-ACP as fatty acyl donor, but not acyl-CoA. This is Phosphate acyltransferase from Burkholderia orbicola (strain MC0-3).